Reading from the N-terminus, the 366-residue chain is MERVLGLLLLLLVHASPAPPEPCELDEESCSCNFSDPKPDWSSAFNCLGAADVELYGGGRSLEYLLKRVDTEADLGQFTDIIKSLSLKRLTVRAARIPSRILFGALRVLGISGLQELTLENLEVTGTAPPPLLEATGPDLNILNLRNVSWATRDAWLAELQQWLKPGLKVLSIAQAHSLNFSCEQVRVFPALSTLDLSDNPELGERGLISALCPLKFPTLQVLALRNAGMETPSGVCSALAAARVQLQGLDLSHNSLRDAAGAPSCDWPSQLNSLNLSFTGLKQVPKGLPAKLSVLDLSYNRLDRNPSPDELPQVGNLSLKGNPFLDSESHSEKFNSGVVTAGAPSSQAVALSGTLALLLGDRLFV.

The signal sequence occupies residues 1 to 15; it reads MERVLGLLLLLLVHA. Intrachain disulfides connect C23/C32 and C30/C47. N33 carries N-linked (GlcNAc...) asparagine glycosylation. 11 LRR repeats span residues 50-78, 79-114, 115-140, 141-168, 169-192, 193-220, 221-247, 248-272, 273-293, 294-315, and 316-340; these read AADVELYGGGRSLEYLLKRVDTEADLGQF, TDIIKSLSLKRLTVRAARIPSRILFGALRVLGISGL, QELTLENLEVTGTAPPPLLEATGPDL, NILNLRNVSWATRDAWLAELQQWLKPGL, KVLSIAQAHSLNFSCEQVRVFPAL, STLDLSDNPELGERGLISALCPLKFPTL, QVLALRNAGMETPSGVCSALAAARVQL, QGLDLSHNSLRDAAGAPSCDWPSQL, NSLNLSFTGLKQVPKGLPAKL, SVLDLSYNRLDRNPSPDELPQV, and GNLSLKGNPFLDSESHSEKFNSGVV. N-linked (GlcNAc...) asparagine glycans are attached at residues N147 and N180. Disulfide bonds link C183-C213 and C237-C266. N276 carries an N-linked (GlcNAc...) asparagine glycan. The tract at residues 284–366 is required for response to bacterial lipopolysaccharide (LPS); it reads QVPKGLPAKL…ALLLGDRLFV (83 aa). An N-linked (GlcNAc...) asparagine glycan is attached at N317. N336 is lipidated: GPI-anchor amidated asparagine. Positions 337–366 are cleaved as a propeptide — removed in mature form; the sequence is SGVVTAGAPSSQAVALSGTLALLLGDRLFV.

Belongs to the lipopolysaccharide (LPS) receptor, a multi-protein complex containing at least CD14, LY96 and TLR4. Interacts with LPS-bound LPB. Interacts with LPAR1. Interacts with the TLR2:TLR6 or TLR2:TLR1 heterodimers; upon interaction with ligands such as diacylated lipopeptides and triacylated lipopeptides, respectively. Interacts with MYO18A. Interacts with FSTL1. As to expression, detected on peritoneal macrophages (at protein level). Cell surface expression detected in lung alveolar macrophages, dendritic macrophages and lung macrophages (at protein level).

Its subcellular location is the cell membrane. The protein resides in the secreted. It localises to the membrane raft. It is found in the golgi apparatus. Its function is as follows. Coreceptor for bacterial lipopolysaccharide. In concert with LBP, binds to monomeric lipopolysaccharide and delivers it to the LY96/TLR4 complex, thereby mediating the innate immune response to bacterial lipopolysaccharide (LPS). Acts via MyD88, TIRAP and TRAF6, leading to NF-kappa-B activation, cytokine secretion and the inflammatory response. Acts as a coreceptor for TLR2:TLR6 heterodimer in response to diacylated lipopeptides and for TLR2:TLR1 heterodimer in response to triacylated lipopeptides, these clusters trigger signaling from the cell surface and subsequently are targeted to the Golgi in a lipid-raft dependent pathway. Acts as an accessory receptor for M.tuberculosis lipoproteins LprA, LprG and LpqH, in conjunction with coreceptors TLR2 and TLR1. The lipoproteins act as agonists to modulate antigen presenting cell functions in response to the pathogen. Binds electronegative LDL (LDL(-)) and mediates the cytokine release induced by LDL(-). The protein is Monocyte differentiation antigen CD14 (Cd14) of Mus musculus (Mouse).